Consider the following 327-residue polypeptide: Ferrochelatase 2 (327 aa).

Positions 201 and 282 each coordinate Fe cation.

The protein belongs to the ferrochelatase family.

The protein resides in the cytoplasm. The enzyme catalyses heme b + 2 H(+) = protoporphyrin IX + Fe(2+). It functions in the pathway porphyrin-containing compound metabolism; protoheme biosynthesis; protoheme from protoporphyrin-IX: step 1/1. Its function is as follows. Catalyzes the ferrous insertion into protoporphyrin IX. This chain is Ferrochelatase 2, found in Shewanella oneidensis (strain ATCC 700550 / JCM 31522 / CIP 106686 / LMG 19005 / NCIMB 14063 / MR-1).